Consider the following 459-residue polypeptide: Cysteine--tRNA ligase (459 aa).

Residue cysteine 31 participates in Zn(2+) binding. The short motif at 33 to 43 (PTVYDNPHIGN) is the 'HIGH' region element. 3 residues coordinate Zn(2+): cysteine 216, histidine 241, and glutamate 245. The 'KMSKS' region motif lies at 274–278 (KMSKS). Lysine 277 is a binding site for ATP.

It belongs to the class-I aminoacyl-tRNA synthetase family. As to quaternary structure, monomer. Requires Zn(2+) as cofactor.

It is found in the cytoplasm. It catalyses the reaction tRNA(Cys) + L-cysteine + ATP = L-cysteinyl-tRNA(Cys) + AMP + diphosphate. The protein is Cysteine--tRNA ligase of Rickettsia canadensis (strain McKiel).